The following is a 270-amino-acid chain: 3-methyl-2-oxobutanoate hydroxymethyltransferase (270 aa).

The Mg(2+) site is built by Asp-50 and Asp-89. Residues 50–51, Asp-89, and Lys-118 each bind 3-methyl-2-oxobutanoate; that span reads DS. Glu-120 lines the Mg(2+) pocket. Glu-187 functions as the Proton acceptor in the catalytic mechanism.

The protein belongs to the PanB family. As to quaternary structure, homodecamer; pentamer of dimers. It depends on Mg(2+) as a cofactor.

The protein resides in the cytoplasm. It catalyses the reaction 3-methyl-2-oxobutanoate + (6R)-5,10-methylene-5,6,7,8-tetrahydrofolate + H2O = 2-dehydropantoate + (6S)-5,6,7,8-tetrahydrofolate. The protein operates within cofactor biosynthesis; (R)-pantothenate biosynthesis; (R)-pantoate from 3-methyl-2-oxobutanoate: step 1/2. Its function is as follows. Catalyzes the reversible reaction in which hydroxymethyl group from 5,10-methylenetetrahydrofolate is transferred onto alpha-ketoisovalerate to form ketopantoate. The chain is 3-methyl-2-oxobutanoate hydroxymethyltransferase from Helicobacter pylori (strain P12).